A 246-amino-acid polypeptide reads, in one-letter code: MESIFGGFGDLVVPRPKEHLGQTDLSFGGKLLPALKICEDGGESGCGGKVWIAGELLCEYILEKSVDHLLSKTVNGTKQFKKVLELGSGTGLVGLCVGLLEKNTFHDGTKVYVTDIDKLIPLLKRNIELDEVQYEVLARELWWGEPLSADFSPQEGAMQANNVDLVLAADCVYLEEAFPLLEKTLLDLTHCINPPVILMAYKKRRKADKHFFNKIKRNFDVLEITDFSKFEHYLKERTHLFQLIRK.

Residues tryptophan 51, 87–89 (GSG), aspartate 115, tryptophan 143, and alanine 169 each bind S-adenosyl-L-methionine.

It belongs to the class I-like SAM-binding methyltransferase superfamily. METTL21 family. EFM6 subfamily.

Its subcellular location is the cytoplasm. In terms of biological role, S-adenosyl-L-methionine-dependent protein-lysine N-methyltransferase that methylates elongation factor 1-alpha (TEF1 and TEF2) at 'Lys-390'. The protein is Protein-lysine N-methyltransferase EFM6 of Saccharomyces cerevisiae (strain ATCC 204508 / S288c) (Baker's yeast).